Reading from the N-terminus, the 116-residue chain is Histone H2B (116 aa).

A compositionally biased stretch (basic residues) spans T1–K11. A disordered region spans residues T1–K25. N6-acetyllysine occurs at positions 4, 11, and 14. O-linked (GlcNAc) serine glycosylation is present at S103. K111 participates in a covalent cross-link: Glycyl lysine isopeptide (Lys-Gly) (interchain with G-Cter in ubiquitin).

In terms of assembly, the nucleosome is a histone octamer containing two molecules each of H2A, H2B, H3 and H4 assembled in one H3-H4 heterotetramer and two H2A-H2B heterodimers. The octamer wraps approximately 147 bp of DNA. Monoubiquitination gives a specific tag for epigenetic transcriptional activation and is also prerequisite for histone H3 'Lys-4' and 'Lys-79' methylation. In terms of processing, glcNAcylation at Ser-103 promotes monoubiquitination of Lys-111. It fluctuates in response to extracellular glucose, and associates with transcribed genes.

It localises to the nucleus. The protein resides in the chromosome. Its function is as follows. Core component of nucleosome. Nucleosomes wrap and compact DNA into chromatin, limiting DNA accessibility to the cellular machineries which require DNA as a template. Histones thereby play a central role in transcription regulation, DNA repair, DNA replication and chromosomal stability. DNA accessibility is regulated via a complex set of post-translational modifications of histones, also called histone code, and nucleosome remodeling. Functionally, a mixture of histones H2B and H4 has antimicrobial activity against the Gram-positive bacterium M.luteus. This is Histone H2B from Penaeus vannamei (Whiteleg shrimp).